A 235-amino-acid chain; its full sequence is Glycerol uptake facilitator protein 2 (235 aa).

The next 6 helical transmembrane spans lie at 4–24 (FLGE…SGAA), 39–59 (FICL…GQFG), 62–82 (GHLN…PMAN), 83–103 (VWPY…IVII), 134–154 (VFNF…LLNL), and 165–185 (MVGL…GFAI). The NPA 1 motif lies at 65 to 67 (NPA). The NPA 2 motif lies at 186 to 188 (NPA). The helical transmembrane segment at 210–230 (WGYAWVPMFGPLLGGILAAGL) threads the bilayer.

This sequence belongs to the MIP/aquaporin (TC 1.A.8) family.

It is found in the cell membrane. Its function is as follows. Transporter that facilitates the transmembrane diffusion of water, dihydroxyacetone, glycerol and H(2)O(2). Is not permeable to urea and D/L-lactic acid. This Lactiplantibacillus plantarum (strain ATCC BAA-793 / NCIMB 8826 / WCFS1) (Lactobacillus plantarum) protein is Glycerol uptake facilitator protein 2.